The sequence spans 160 residues: SsrA-binding protein (160 aa).

Residues 130 to 160 (LAKGKKKHDKRADQKEQDWQRQKQRLMKHKV) are disordered. Over residues 139–150 (KRADQKEQDWQR) the composition is skewed to basic and acidic residues. Over residues 151–160 (QKQRLMKHKV) the composition is skewed to basic residues.

Belongs to the SmpB family.

The protein localises to the cytoplasm. Required for rescue of stalled ribosomes mediated by trans-translation. Binds to transfer-messenger RNA (tmRNA), required for stable association of tmRNA with ribosomes. tmRNA and SmpB together mimic tRNA shape, replacing the anticodon stem-loop with SmpB. tmRNA is encoded by the ssrA gene; the 2 termini fold to resemble tRNA(Ala) and it encodes a 'tag peptide', a short internal open reading frame. During trans-translation Ala-aminoacylated tmRNA acts like a tRNA, entering the A-site of stalled ribosomes, displacing the stalled mRNA. The ribosome then switches to translate the ORF on the tmRNA; the nascent peptide is terminated with the 'tag peptide' encoded by the tmRNA and targeted for degradation. The ribosome is freed to recommence translation, which seems to be the essential function of trans-translation. This is SsrA-binding protein from Alkalilimnicola ehrlichii (strain ATCC BAA-1101 / DSM 17681 / MLHE-1).